The primary structure comprises 209 residues: Peptide deformylase 2 (209 aa).

Residues cysteine 101 and histidine 149 each coordinate Fe cation. Glutamate 150 is an active-site residue. Histidine 153 serves as a coordination point for Fe cation.

Belongs to the polypeptide deformylase family. Fe(2+) is required as a cofactor.

The catalysed reaction is N-terminal N-formyl-L-methionyl-[peptide] + H2O = N-terminal L-methionyl-[peptide] + formate. Its function is as follows. Removes the formyl group from the N-terminal Met of newly synthesized proteins. Requires at least a dipeptide for an efficient rate of reaction. N-terminal L-methionine is a prerequisite for activity but the enzyme has broad specificity at other positions. This Coxiella burnetii (strain RSA 493 / Nine Mile phase I) protein is Peptide deformylase 2.